Reading from the N-terminus, the 214-residue chain is ATP phosphoribosyltransferase (214 aa).

Belongs to the ATP phosphoribosyltransferase family. Short subfamily. In terms of assembly, heteromultimer composed of HisG and HisZ subunits.

The protein resides in the cytoplasm. It carries out the reaction 1-(5-phospho-beta-D-ribosyl)-ATP + diphosphate = 5-phospho-alpha-D-ribose 1-diphosphate + ATP. It functions in the pathway amino-acid biosynthesis; L-histidine biosynthesis; L-histidine from 5-phospho-alpha-D-ribose 1-diphosphate: step 1/9. Functionally, catalyzes the condensation of ATP and 5-phosphoribose 1-diphosphate to form N'-(5'-phosphoribosyl)-ATP (PR-ATP). Has a crucial role in the pathway because the rate of histidine biosynthesis seems to be controlled primarily by regulation of HisG enzymatic activity. This is ATP phosphoribosyltransferase from Azoarcus sp. (strain BH72).